Reading from the N-terminus, the 222-residue chain is UPF0502 protein PBPRB0676 (222 aa).

It belongs to the UPF0502 family.

The protein is UPF0502 protein PBPRB0676 of Photobacterium profundum (strain SS9).